The primary structure comprises 861 residues: MKLGWIEVAALAAASVVSAKDDLAYSPPFYPSPWADGQGEWAEVYKRAVDIVSQMTLTEKVNLTTGTGWQLERCVGQTGSVPRLNIPSLCLQDSPLGIRFSDYNSAFPAGVNVAATWDKTLAYLRGQAMGEEFSDKGIDVQLGPAAGPLGAHPDGGRNWEGFSPDPALTGVLFAETIKGIQDAGVIATAKHYIMNEQEHFRQQPEAAGYGFNVSDSLSSNVDDKTMHELYLWPFADAVRAGVGAVMCSYNQINNSYGCENSETLNKLLKAELGFQGFVMSDWTAHHSGVGAALAGLDMSMPGDVTFDSGTSFWGANLTVGVLNGTIPQWRVDDMAVRIMAAYYKVGRDTKYTPPNFSSWTRDEYGFAHNHVSEGAYERVNEFVDVQRDHADLIRRIGAQSTVLLKNKGALPLSRKEKLVALLGEDAGSNSWGANGCDDRGCDNGTLAMAWGSGTANFPYLVTPEQAIQNEVLQGRGNVFAVTDSWALDKIAAAARQASVSLVFVNSDSGEGYLSVDGNEGDRNNITLWKNGDNVVKTAANNCNNTVVIIHSVGPVLIDEWYDHPNVTGILWAGLPGQESGNSIADVLYGRVNPGAKSPFTWGKTRESYGSPLVKDANNGNGAPQSDFTQGVFIDYRHFDKFNETPIYEFGYGLSYTTFELSDLHVQPLNASRYTPTSGMTEAAKNFGEIGDASEYVYPEGLERIHEFIYPWINSTDLKASSDDSNYGWEDSKYIPEGATDGSAQPRLPASGGAGGNPGLYEDLFRVSVKVKNTGNVAGDEVPQLYVSLGGPNEPKVVLRKFERIHLAPSQEAVWTTTLTRRDLANWDVSAQDWTVTPYPKTIYVGNSSRKLPLQASLPKAQ.

The signal sequence occupies residues 1 to 19; it reads MKLGWIEVAALAAASVVSA. N62, N212, and N253 each carry an N-linked (GlcNAc...) asparagine glycan. Residue D281 is part of the active site. 9 N-linked (GlcNAc...) asparagine glycosylation sites follow: N316, N323, N355, N443, N524, N543, N565, N669, and N713. The segment at 730-754 is disordered; the sequence is DSKYIPEGATDGSAQPRLPASGGAG. N-linked (GlcNAc...) asparagine glycosylation is present at N846.

This sequence belongs to the glycosyl hydrolase 3 family.

The protein localises to the secreted. The enzyme catalyses Hydrolysis of terminal, non-reducing beta-D-glucosyl residues with release of beta-D-glucose.. It functions in the pathway glycan metabolism; cellulose degradation. Its function is as follows. Beta-glucosidases are one of a number of cellulolytic enzymes involved in the degradation of cellulosic biomass. Catalyzes the last step releasing glucose from the inhibitory cellobiose. This is Probable beta-glucosidase A (bglA) from Aspergillus oryzae (strain ATCC 42149 / RIB 40) (Yellow koji mold).